A 109-amino-acid chain; its full sequence is Putative double-stranded DNA mimic protein KPK_2119 (109 aa).

The protein belongs to the putative dsDNA mimic protein family.

Functionally, may act as a double-stranded DNA (dsDNA) mimic. Probably regulates the activity of a dsDNA-binding protein. This Klebsiella pneumoniae (strain 342) protein is Putative double-stranded DNA mimic protein KPK_2119.